A 398-amino-acid polypeptide reads, in one-letter code: MSSKLQNITVLGATGSIGVSTLDVIRRHPDRYRAFALCAHSQVDKLFEQCVEFRPRFAVLRDASLAATLSERCRSVGLDTEVRYGVEALIELSSLPEVDAVMAAIVGAAGLEPTLAAARAGKKVMLANKEVLVMAGELFMHAVREYGATLLPVDSEHNAIFQSLPADFARGLESCGVQKILLTASGGPFRNSPLADLANVTPEQACAHPNWVMGRKISVDSATMMNKGLEVIEAHWLFAAPPDMIQVVVHPQSVIHSAVQYADGSVLAQLGNPDMRTPIAYAMAWPERIAAGVEPLDLFKIARLDFSAPDFERFRCLQLAYDVLREGGTAPAILNAANEVAVAAFLDGHLPFLGIALLNEAVLQAMPAGPEGSLADVLAADAEARHLAGQLIRQQRFA.

T14, G15, S16, I17, Q42, and N128 together coordinate NADPH. 1-deoxy-D-xylulose 5-phosphate is bound at residue K129. Residue E130 coordinates NADPH. D154 lines the Mn(2+) pocket. 1-deoxy-D-xylulose 5-phosphate is bound by residues S155, E156, S185, and H208. E156 provides a ligand contact to Mn(2+). G214 is a binding site for NADPH. Residues S221, N226, K227, and E230 each contribute to the 1-deoxy-D-xylulose 5-phosphate site. E230 lines the Mn(2+) pocket.

The protein belongs to the DXR family. Requires Mg(2+) as cofactor. Mn(2+) is required as a cofactor.

The enzyme catalyses 2-C-methyl-D-erythritol 4-phosphate + NADP(+) = 1-deoxy-D-xylulose 5-phosphate + NADPH + H(+). It functions in the pathway isoprenoid biosynthesis; isopentenyl diphosphate biosynthesis via DXP pathway; isopentenyl diphosphate from 1-deoxy-D-xylulose 5-phosphate: step 1/6. Functionally, catalyzes the NADPH-dependent rearrangement and reduction of 1-deoxy-D-xylulose-5-phosphate (DXP) to 2-C-methyl-D-erythritol 4-phosphate (MEP). The sequence is that of 1-deoxy-D-xylulose 5-phosphate reductoisomerase from Dechloromonas aromatica (strain RCB).